We begin with the raw amino-acid sequence, 555 residues long: Dihydroxy-acid dehydratase (555 aa).

Asp-78 serves as a coordination point for Mg(2+). Residue Cys-119 coordinates [2Fe-2S] cluster. Mg(2+) is bound by residues Asp-120 and Lys-121. At Lys-121 the chain carries N6-carboxylysine. Cys-191 contributes to the [2Fe-2S] cluster binding site. Glu-444 is a binding site for Mg(2+). The active-site Proton acceptor is the Ser-470.

It belongs to the IlvD/Edd family. As to quaternary structure, homodimer. The cofactor is [2Fe-2S] cluster. Mg(2+) serves as cofactor.

The catalysed reaction is (2R)-2,3-dihydroxy-3-methylbutanoate = 3-methyl-2-oxobutanoate + H2O. The enzyme catalyses (2R,3R)-2,3-dihydroxy-3-methylpentanoate = (S)-3-methyl-2-oxopentanoate + H2O. The protein operates within amino-acid biosynthesis; L-isoleucine biosynthesis; L-isoleucine from 2-oxobutanoate: step 3/4. It participates in amino-acid biosynthesis; L-valine biosynthesis; L-valine from pyruvate: step 3/4. In terms of biological role, functions in the biosynthesis of branched-chain amino acids. Catalyzes the dehydration of (2R,3R)-2,3-dihydroxy-3-methylpentanoate (2,3-dihydroxy-3-methylvalerate) into 2-oxo-3-methylpentanoate (2-oxo-3-methylvalerate) and of (2R)-2,3-dihydroxy-3-methylbutanoate (2,3-dihydroxyisovalerate) into 2-oxo-3-methylbutanoate (2-oxoisovalerate), the penultimate precursor to L-isoleucine and L-valine, respectively. This chain is Dihydroxy-acid dehydratase, found in Maridesulfovibrio salexigens (strain ATCC 14822 / DSM 2638 / NCIMB 8403 / VKM B-1763) (Desulfovibrio salexigens).